Here is a 265-residue protein sequence, read N- to C-terminus: Mlc titration factor A (265 aa).

Zn(2+)-binding residues include H111, H148, H152, and E211.

This sequence belongs to the MtfA family. As to quaternary structure, interacts with Mlc. It depends on Zn(2+) as a cofactor.

The protein resides in the cytoplasm. In terms of biological role, involved in the modulation of the activity of the glucose-phosphotransferase system (glucose-PTS). Interacts with the transcriptional repressor Mlc, preventing its interaction with DNA and leading to the modulation of expression of genes regulated by Mlc, including ptsG, which encodes the PTS system glucose-specific EIICB component. Functionally, shows zinc-dependent metallopeptidase activity. The chain is Mlc titration factor A from Salmonella paratyphi A (strain AKU_12601).